Consider the following 660-residue polypeptide: tRNA 5-methylaminomethyl-2-thiouridine biosynthesis bifunctional protein MnmC (660 aa).

The tRNA (mnm(5)s(2)U34)-methyltransferase stretch occupies residues 1–242; the sequence is MTDRIVPATL…KRAMLVGEFA (242 aa). The tract at residues 266 to 660 is FAD-dependent cmnm(5)s(2)U34 oxidoreductase; sequence IGAGLAGCAV…VRALRHGRVA (395 aa).

In the N-terminal section; belongs to the methyltransferase superfamily. tRNA (mnm(5)s(2)U34)-methyltransferase family. It in the C-terminal section; belongs to the DAO family. The cofactor is FAD.

The protein localises to the cytoplasm. The enzyme catalyses 5-aminomethyl-2-thiouridine(34) in tRNA + S-adenosyl-L-methionine = 5-methylaminomethyl-2-thiouridine(34) in tRNA + S-adenosyl-L-homocysteine + H(+). Its function is as follows. Catalyzes the last two steps in the biosynthesis of 5-methylaminomethyl-2-thiouridine (mnm(5)s(2)U) at the wobble position (U34) in tRNA. Catalyzes the FAD-dependent demodification of cmnm(5)s(2)U34 to nm(5)s(2)U34, followed by the transfer of a methyl group from S-adenosyl-L-methionine to nm(5)s(2)U34, to form mnm(5)s(2)U34. The protein is tRNA 5-methylaminomethyl-2-thiouridine biosynthesis bifunctional protein MnmC of Burkholderia pseudomallei (strain 1710b).